Reading from the N-terminus, the 578-residue chain is MKDTIRQLIQQALTQLVTDGVLPEGLSPAIQVENARDKTHGDFASNIAMMLAKPAGMKPRDLAEKLINALPASADISKVEIAGPGFLNFFQNTDALANRLDAALADAHLGARKAGPAQKVVIDMSAPNLAKEMHVGHLRSTIIGDSVARVLEFLGDNVIRQNHVGDWGTQFGMLMAYLQENPITSDELSDLENFYRAAKKRFDESEEFATRARGLVVKLQAGDPECLALWTRFKDISLSHCQKTYELLNVKLTMADVMGESAYNDDLANVVADLKAKGLLVEDQGAQCVFLEEFKNSDGDPLPVIVQKADGGYLYATTDLAAVRYRSNVLKADRALYFVDQRQALHFNQVFEVARRAGFVGHPMQMEHMGFGTMNGADGRPFKTRDGGTVKLIDLLTEAKERAYALVKEKNPSLADDELRHIGEVVGIGAVKYADLSKHRTSDYSFNFELMLNFEGNTAPYLLYAYTRVAGVFRKLGKGFDEVDGKIVLQAAHEQDLAARLAQFGEILNNVAEKGTPHVLCSYLYDLAGLFSSFYENCPILAAETPSQQQSRLRLAALTGRTLKQGLELLGLETLERM.

Positions Pro127–His137 match the 'HIGH' region motif.

This sequence belongs to the class-I aminoacyl-tRNA synthetase family. Monomer.

It is found in the cytoplasm. The enzyme catalyses tRNA(Arg) + L-arginine + ATP = L-arginyl-tRNA(Arg) + AMP + diphosphate. The chain is Arginine--tRNA ligase from Pseudomonas putida (strain ATCC 47054 / DSM 6125 / CFBP 8728 / NCIMB 11950 / KT2440).